Here is a 1093-residue protein sequence, read N- to C-terminus: Carbamoyl phosphate synthase large chain (1093 aa).

Positions 1–412 (MPRRNDIRKI…SLMKALRSLE (412 aa)) are carboxyphosphate synthetic domain. 12 residues coordinate ATP: R139, R179, G185, G186, E218, V220, E225, G251, V252, H253, Q295, and E309. The region spanning 143–338 (KDAMTRIGLD…IAKIAAKLAV (196 aa)) is the ATP-grasp 1 domain. Residues Q295, E309, and N311 each contribute to the Mg(2+) site. The Mn(2+) site is built by Q295, E309, and N311. Residues 413–560 (TGKRVGAEVL…YSSYEEEDEA (148 aa)) form an oligomerization domain region. The carbamoyl phosphate synthetic domain stretch occupies residues 561-952 (PQTDKRKVII…AFAKAQLSAG (392 aa)). The region spanning 689–880 (GKLLEQLQIP…LAKIASRLMT (192 aa)) is the ATP-grasp 2 domain. The ATP site is built by R725, H764, L766, E771, G796, I797, H798, S799, Q839, and E851. 3 residues coordinate Mg(2+): Q839, E851, and N853. Residues Q839, E851, and N853 each contribute to the Mn(2+) site. In terms of domain architecture, MGS-like spans 953–1093 (LILPSSGTVF…QLLHAGHAVK (141 aa)). The tract at residues 953-1093 (LILPSSGTVF…QLLHAGHAVK (141 aa)) is allosteric domain.

Belongs to the CarB family. In terms of assembly, composed of two chains; the small (or glutamine) chain promotes the hydrolysis of glutamine to ammonia, which is used by the large (or ammonia) chain to synthesize carbamoyl phosphate. Tetramer of heterodimers (alpha,beta)4. It depends on Mg(2+) as a cofactor. Mn(2+) serves as cofactor.

The enzyme catalyses hydrogencarbonate + L-glutamine + 2 ATP + H2O = carbamoyl phosphate + L-glutamate + 2 ADP + phosphate + 2 H(+). It catalyses the reaction hydrogencarbonate + NH4(+) + 2 ATP = carbamoyl phosphate + 2 ADP + phosphate + 2 H(+). Its pathway is amino-acid biosynthesis; L-arginine biosynthesis; carbamoyl phosphate from bicarbonate: step 1/1. It participates in pyrimidine metabolism; UMP biosynthesis via de novo pathway; (S)-dihydroorotate from bicarbonate: step 1/3. In terms of biological role, large subunit of the glutamine-dependent carbamoyl phosphate synthetase (CPSase). CPSase catalyzes the formation of carbamoyl phosphate from the ammonia moiety of glutamine, carbonate, and phosphate donated by ATP, constituting the first step of 2 biosynthetic pathways, one leading to arginine and/or urea and the other to pyrimidine nucleotides. The large subunit (synthetase) binds the substrates ammonia (free or transferred from glutamine from the small subunit), hydrogencarbonate and ATP and carries out an ATP-coupled ligase reaction, activating hydrogencarbonate by forming carboxy phosphate which reacts with ammonia to form carbamoyl phosphate. This Acidobacterium capsulatum (strain ATCC 51196 / DSM 11244 / BCRC 80197 / JCM 7670 / NBRC 15755 / NCIMB 13165 / 161) protein is Carbamoyl phosphate synthase large chain.